A 537-amino-acid chain; its full sequence is Cryptic loci regulator 2 (537 aa).

The tract at residues 96-116 (VSARHVRPNPKSSKDTLEKQP) is disordered. Residues 107 to 116 (SSKDTLEKQP) are compositionally biased toward basic and acidic residues.

In terms of assembly, interacts with clr3.

It is found in the nucleus. Its subcellular location is the chromosome. The protein localises to the centromere. The protein resides in the telomere. In terms of biological role, required for deacetylation in the mating-type region and the centromere. Acts upstream of the histone deacetylases to promote transcriptional silencing. Required for proper positioning of nucleosomes at heterochromatic loci and for transcriptional gene silencing (TGS) function of the Snf2/Hdac-containing repressor complex (SHREC). This is Cryptic loci regulator 2 (clr2) from Schizosaccharomyces pombe (strain 972 / ATCC 24843) (Fission yeast).